The primary structure comprises 44 residues: Photosystem I reaction center subunit IX (44 aa).

A helical transmembrane segment spans residues 9 to 29 (YMRSAPVVAAAWITMTAGIII).

Belongs to the PsaJ family.

It localises to the cellular thylakoid membrane. May help in the organization of the PsaE and PsaF subunits. The sequence is that of Photosystem I reaction center subunit IX from Prochlorococcus marinus (strain MIT 9312).